The sequence spans 801 residues: MKYGYFDNDNREYVITRPDVPAPWTNYLGTEKFCTVISHNAGGYSFYNSPEYNRVTKFRPNATFDRPGHYVYLRDDDSGDYWSISWQPVAKSLDEAQYQIRHGLSYSKFQCDYNGIHARKTLFVPKGEDAEIWDVVIKNTSDQVRTISAFSFVEFSFSHIQSDNQNHQMSLYSAGTAYRPGLIEYDLYYNTDDFEGFYYLASTFDPDSYDGQRDRFLGLYRDEANPLAVEQGRCSNSAQTCYNHCGSLHKQFTLQPGEEIRFAYILGIGKGNGERLREHYQDVANIDAAFAAIKAHWDERCAKFQVKSPNQGLDTMINAWTLYQAETCVVWSRFASFIEVGGRTGLGYRDTAQDAISVPHANPEMTRKRIVDLLRGQVKAGYGLHLFDPDWFDPEKEDVAPSKSPTVVPTPSDEDKIHGIKDTCSDDHLWLIPTICKYVMETGETSFFDQMIPYADGGEASVYEHMKAALDFSAEYVGQTGICKGLRADWNDCLNLGGGESSMVSFLHFWALQEFIDLAKFLGKDQDVNTYTEMAANVREACETHLWDDEGGWYIRGLTKNGDKIGTAQQQEGRVHLESNTLAVLSGLASQERGEQAMDAVDEHLFSPYGLHLNAPSFSTPNDDIGFVTRVYQGVKENGAIFSHPNPWAWVAETKLGRGDRAMKFYDALNPYNQNDIIEKRIAEPYSYVQFIMGRDHQDHGRANHPWLTGTSGWAYFAVTNYILGVQSGFTGLSVDPCIPSDWPGFEVTRQWRGATYHIQVENPDHVSKGVKSITLNGAPIQGRIPPQAQGSDNQVVVVLG.

N-acetyl-alpha-D-glucosamine 1-phosphate is bound by residues Arg333, Arg343, Arg349, Asp350, Trp490, and Asp492. Catalysis depends on Asp492, which acts as the Proton donor. Residues Asp492, Lys636, and Glu637 each contribute to the N-acetyl-D-glucosamine site. N-acetyl-alpha-D-glucosamine 1-phosphate contacts are provided by Glu637, His644, Gln690, Thr709, and Gly710.

This sequence belongs to the glycosyl hydrolase 94 family. Homodimer.

The catalysed reaction is N,N'-diacetylchitobiose + phosphate = N-acetyl-alpha-D-glucosamine 1-phosphate + N-acetyl-D-glucosamine. Its function is as follows. Catalyzes the reversible phosphorolysis of chitobiose (N,N'-diacetylchitobiose or (GlcNAc)(2)) into N-acetyl-alpha-D-glucosamine 1-phosphate (GlcNAc-1-P) and N-acetyl-D-glucosamine (GlcNAc) with inversion of the anomeric configuration. In the synthetic reaction, is also active on glucose-1-phosphate with 10% activity as compared with that on GlcNAc-1-P. GlcNAc is the best acceptor substrate, but the enzyme can use aryl-beta-glycosides of GlcNAc as the acceptor substrate with 10-20% activities of GlcNAc. Shows no phosphorolytic activity on cellobiose. This is N,N'-diacetylchitobiose phosphorylase from Vibrio proteolyticus (Aeromonas proteolytica).